A 680-amino-acid chain; its full sequence is Potassium-transporting ATPase ATP-binding subunit (680 aa).

Transmembrane regions (helical) follow at residues 37 to 57 (VIFV…LDVA), 69 to 89 (IAAW…VAEG), 223 to 243 (ILLS…WGLA), and 257 to 277 (ALLV…IGIA). The active-site 4-aspartylphosphate intermediate is the Asp307. ATP contacts are provided by residues Asp344, Glu348, 375-382 (FTAETRLS), and Lys393. Residues Asp516 and Asp520 each contribute to the Mg(2+) site. The next 3 helical transmembrane spans lie at 586–606 (FAII…LNIM), 614–634 (AILS…PLAL), and 652–672 (LLVY…LIDL).

It belongs to the cation transport ATPase (P-type) (TC 3.A.3) family. Type IA subfamily. The system is composed of three essential subunits: KdpA, KdpB and KdpC.

It localises to the cell inner membrane. The catalysed reaction is K(+)(out) + ATP + H2O = K(+)(in) + ADP + phosphate + H(+). Part of the high-affinity ATP-driven potassium transport (or Kdp) system, which catalyzes the hydrolysis of ATP coupled with the electrogenic transport of potassium into the cytoplasm. This subunit is responsible for energy coupling to the transport system and for the release of the potassium ions to the cytoplasm. In Rhizobium meliloti (strain 1021) (Ensifer meliloti), this protein is Potassium-transporting ATPase ATP-binding subunit.